Consider the following 65-residue polypeptide: Hirudin-3B (65 aa).

An interaction with thrombin active site region spans residues 1 to 3 (VVY). Disulfide bonds link cysteine 6-cysteine 14, cysteine 16-cysteine 28, and cysteine 22-cysteine 39. A disordered region spans residues 40–65 (VTGEGTPKPQSHNDGDFEEIPEEYLQ). Residue threonine 45 is glycosylated (O-linked (GalNAc...) threonine). The segment at 55–65 (DFEEIPEEYLQ) is interaction with fibrinogen-binding exosite of thrombin. Acidic residues predominate over residues 55–65 (DFEEIPEEYLQ). Tyrosine 63 is modified (sulfotyrosine).

This sequence belongs to the protease inhibitor I14 (hirudin) family.

It is found in the secreted. Its function is as follows. Hirudin is a potent thrombin-specific protease inhibitor. It forms a stable non-covalent complex with alpha-thrombin, thereby abolishing its ability to cleave fibrinogen. This chain is Hirudin-3B, found in Hirudo medicinalis (Medicinal leech).